We begin with the raw amino-acid sequence, 57 residues long: Small ribosomal subunit protein bS21 (57 aa).

The disordered stretch occupies residues 35–57 (REHYEKPSVKRKKKAEAARKKKF). Over residues 43–57 (VKRKKKAEAARKKKF) the composition is skewed to basic residues.

This sequence belongs to the bacterial ribosomal protein bS21 family.

This chain is Small ribosomal subunit protein bS21, found in Alkaliphilus metalliredigens (strain QYMF).